The following is a 364-amino-acid chain: Protein PTOV1 homolog (364 aa).

Residues 187-207 (AKRKPGVKTPKQPQPEEPPPV) are disordered.

It belongs to the Mediator complex subunit 25 family. PTOV1 subfamily.

This Drosophila melanogaster (Fruit fly) protein is Protein PTOV1 homolog.